Here is a 370-residue protein sequence, read N- to C-terminus: Gap junction delta-4 protein (370 aa).

The Cytoplasmic portion of the chain corresponds to 1 to 19 (MEGVDLLGFLIITLNCNVT). The chain crosses the membrane as a helical span at residues 20 to 40 (MVGKLWFVLTMLLRMLVIVLA). The Extracellular segment spans residues 41 to 76 (GRPVYQDEQERFVCNTLQPGCANVCYDVFSPVSHLR). Residues 77–97 (FWLIQGVCVLLPSAVFSVYVL) traverse the membrane as a helical segment. Residues 98-146 (HRGATLAALGPRRCPDPREPASGQRRCPRPFGERGGLQVPDFSAGYIIH) lie on the Cytoplasmic side of the membrane. A helical membrane pass occupies residues 147 to 167 (LLLRTLLEAAFGALHYFLFGF). The Extracellular portion of the chain corresponds to 168–196 (LAPKKFPCTRPPCTGVVDCYVSRPTEKSL). A helical membrane pass occupies residues 197 to 217 (LMLFLWAVSALSFLLGLADLV). The Cytoplasmic portion of the chain corresponds to 218–370 (CSLRRRMRRR…HLRARKSEWV (153 aa)). A disordered region spans residues 224 to 370 (MRRRPGPPTS…HLRARKSEWV (147 aa)). Over residues 246–260 (AEGRRTDEEGGREEE) the composition is skewed to basic and acidic residues. Positions 331-346 (PSAAPSRLAAPPSCSS) are enriched in low complexity.

This sequence belongs to the connexin family. Delta-type subfamily. As to quaternary structure, a connexon is composed of a hexamer of connexins. In terms of tissue distribution, expressed in pancreas, kidney, skeletal muscle, liver, placenta, and heart.

It is found in the cell membrane. It localises to the cell junction. The protein resides in the gap junction. Its function is as follows. One gap junction consists of a cluster of closely packed pairs of transmembrane channels, the connexons, through which materials of low MW diffuse from one cell to a neighboring cell. This is Gap junction delta-4 protein (GJD4) from Homo sapiens (Human).